Consider the following 439-residue polypeptide: Cobyrinate a,c-diamide synthase (439 aa).

Residues 214 to 235 (ETARAPPEVATTERNTGDSPAD) form a disordered region. One can recognise a GATase cobBQ-type domain in the interval 237–428 (RVAVAQDSAF…CHCHGESGAF (192 aa)). The Nucleophile role is filled by Cys317.

The protein belongs to the CobB/CbiA family. It depends on Mg(2+) as a cofactor.

It catalyses the reaction cob(II)yrinate + 2 L-glutamine + 2 ATP + 2 H2O = cob(II)yrinate a,c diamide + 2 L-glutamate + 2 ADP + 2 phosphate + 2 H(+). The protein operates within cofactor biosynthesis; adenosylcobalamin biosynthesis; cob(II)yrinate a,c-diamide from sirohydrochlorin (anaerobic route): step 10/10. Catalyzes the ATP-dependent amidation of the two carboxylate groups at positions a and c of cobyrinate, using either L-glutamine or ammonia as the nitrogen source. The chain is Cobyrinate a,c-diamide synthase from Haloarcula marismortui (strain ATCC 43049 / DSM 3752 / JCM 8966 / VKM B-1809) (Halobacterium marismortui).